Reading from the N-terminus, the 371-residue chain is Leu/Ile/Val-binding protein homolog 1 (371 aa).

A signal peptide spans Met-1–Ala-23.

The protein belongs to the leucine-binding protein family.

In terms of biological role, component of an amino-acid transport system. This Brucella abortus (strain 2308) protein is Leu/Ile/Val-binding protein homolog 1.